Consider the following 496-residue polypeptide: Glycerol kinase (496 aa).

ADP is bound at residue Thr-12. Residues Thr-12, Thr-13, and Ser-14 each coordinate ATP. Thr-12 contacts sn-glycerol 3-phosphate. Arg-16 is a binding site for ADP. Residues Arg-82, Glu-83, and Tyr-134 each contribute to the sn-glycerol 3-phosphate site. Glycerol-binding residues include Arg-82, Glu-83, and Tyr-134. Position 230 is a phosphohistidine; by HPr (His-230). Asp-244 is a binding site for sn-glycerol 3-phosphate. The glycerol site is built by Asp-244 and Gln-245. ADP contacts are provided by Thr-266 and Gly-309. Thr-266, Gly-309, Gln-313, and Gly-410 together coordinate ATP. ADP-binding residues include Gly-410 and Asn-414.

It belongs to the FGGY kinase family. In terms of assembly, homotetramer and homodimer (in equilibrium). In terms of processing, the phosphoenolpyruvate-dependent sugar phosphotransferase system (PTS), including enzyme I, and histidine-containing protein (HPr) are required for the phosphorylation, which leads to the activation of the enzyme.

The catalysed reaction is glycerol + ATP = sn-glycerol 3-phosphate + ADP + H(+). It participates in polyol metabolism; glycerol degradation via glycerol kinase pathway; sn-glycerol 3-phosphate from glycerol: step 1/1. Its activity is regulated as follows. Activated by phosphorylation and inhibited by fructose 1,6-bisphosphate (FBP). In terms of biological role, key enzyme in the regulation of glycerol uptake and metabolism. Catalyzes the phosphorylation of glycerol to yield sn-glycerol 3-phosphate. The protein is Glycerol kinase of Geobacillus sp. (strain WCH70).